Reading from the N-terminus, the 95-residue chain is Signal recognition particle 19 kDa protein (95 aa).

The protein belongs to the SRP19 family. In terms of assembly, part of the signal recognition particle protein translocation system, which is composed of SRP and FtsY. Archaeal SRP consists of a 7S RNA molecule of 300 nucleotides and two protein subunits: SRP54 and SRP19.

It localises to the cytoplasm. In terms of biological role, involved in targeting and insertion of nascent membrane proteins into the cytoplasmic membrane. Binds directly to 7S RNA and mediates binding of the 54 kDa subunit of the SRP. This is Signal recognition particle 19 kDa protein from Staphylothermus marinus (strain ATCC 43588 / DSM 3639 / JCM 9404 / F1).